The following is a 321-amino-acid chain: Olfactory receptor 3A3 (321 aa).

Residues 1-34 are Extracellular-facing; sequence MSLQKLMEPEAGTNRTAVAEFILLGLVQTEEMQP. Asparagine 14 carries N-linked (GlcNAc...) asparagine glycosylation. Residues 35–58 form a helical membrane-spanning segment; the sequence is VVFVLLLFAYLVTTGGNLSILAAV. Over 59 to 66 the chain is Cytoplasmic; the sequence is LVEPKLHA. A helical transmembrane segment spans residues 67-88; the sequence is PMYFFLGNLSVLDVGCITVTVP. Residues 89–109 lie on the Extracellular side of the membrane; that stretch reads AMLGRLLSHKSTISYDACLSQ. Cysteines 106 and 198 form a disulfide. Residues 110-129 traverse the membrane as a helical segment; the sequence is LFFFHLLAGMDCFLLTAMAY. The Cytoplasmic portion of the chain corresponds to 130-149; sequence DRLLAICQPLTYSTRMSQTV. A helical membrane pass occupies residues 150-167; sequence QRMLVAASWACAFTNALT. At 168–205 the chain is on the extracellular side; that stretch reads HTVAMSTLNFCGPNEVNHFYCDLPQLFQLSCSSTQLNE. A helical membrane pass occupies residues 206-228; it reads LLLFVAAAFMAVAPLVFISVSYA. Residues 229-245 lie on the Cytoplasmic side of the membrane; it reads HVVAAVLQIRSAEGRKK. The helical transmembrane segment at 246–268 threads the bilayer; that stretch reads AFSTCGSHLTVVGIFYGTGVFSY. At 269–281 the chain is on the extracellular side; sequence MRLGSVESSDKDK. A helical membrane pass occupies residues 282–301; that stretch reads GVGVFMTVINPMLNPLIYSL. The Cytoplasmic segment spans residues 302–321; that stretch reads RNTDVQGALCQLLVGKRSLT.

Belongs to the G-protein coupled receptor 1 family.

Its subcellular location is the cell membrane. Its function is as follows. Odorant receptor. This Homo sapiens (Human) protein is Olfactory receptor 3A3 (OR3A3).